The chain runs to 194 residues: MAGSFTRKMYDNCATQQTTKQSTDPLELLLDVNKYVNCNNICKPLAQRYPSSAQLVDVESSLWGIDKLASRCDSSKHPFCAKNGCLLTNDPRIAPHITPYACEWGHTGDNSVVTTNMKMPSHPGYTLPNPNICKDQTNGYYHNAVKSPNMTGPQHQVIPQHQVVPQHQTVPQHQSVIKPKADQLRYQNIQNRPY.

This sequence belongs to the mimivirus R457/R459 family.

The protein localises to the virion. This is an uncharacterized protein from Acanthamoeba polyphaga mimivirus (APMV).